The sequence spans 291 residues: 4-diphosphocytidyl-2-C-methyl-D-erythritol kinase (291 aa).

K10 is a catalytic residue. Residue 99 to 109 (PMGGGLGGGSS) coordinates ATP. The active site involves D141.

The protein belongs to the GHMP kinase family. IspE subfamily. Homodimer.

The enzyme catalyses 4-CDP-2-C-methyl-D-erythritol + ATP = 4-CDP-2-C-methyl-D-erythritol 2-phosphate + ADP + H(+). It functions in the pathway isoprenoid biosynthesis; isopentenyl diphosphate biosynthesis via DXP pathway; isopentenyl diphosphate from 1-deoxy-D-xylulose 5-phosphate: step 3/6. Its function is as follows. Catalyzes the phosphorylation of the position 2 hydroxy group of 4-diphosphocytidyl-2C-methyl-D-erythritol. This is 4-diphosphocytidyl-2-C-methyl-D-erythritol kinase from Photorhabdus laumondii subsp. laumondii (strain DSM 15139 / CIP 105565 / TT01) (Photorhabdus luminescens subsp. laumondii).